Consider the following 283-residue polypeptide: Polyamine aminopropyltransferase (283 aa).

The region spanning 5 to 238 (QTWIDEYHKG…GIWSWTFASS (234 aa)) is the PABS domain. Gln-32 contacts S-methyl-5'-thioadenosine. Residues His-63 and Asp-87 each contribute to the spermidine site. Residues Glu-107 and 139–140 (DG) each bind S-methyl-5'-thioadenosine. Asp-158 acts as the Proton acceptor in catalysis. 158–161 (DCSD) contacts spermidine.

Belongs to the spermidine/spermine synthase family. In terms of assembly, homodimer or homotetramer.

The protein resides in the cytoplasm. The catalysed reaction is S-adenosyl 3-(methylsulfanyl)propylamine + putrescine = S-methyl-5'-thioadenosine + spermidine + H(+). It participates in amine and polyamine biosynthesis; spermidine biosynthesis; spermidine from putrescine: step 1/1. Functionally, catalyzes the irreversible transfer of a propylamine group from the amino donor S-adenosylmethioninamine (decarboxy-AdoMet) to putrescine (1,4-diaminobutane) to yield spermidine. The chain is Polyamine aminopropyltransferase from Prochlorococcus marinus (strain MIT 9301).